A 182-amino-acid polypeptide reads, in one-letter code: Orotate phosphoribosyltransferase (182 aa).

5-phospho-alpha-D-ribose 1-diphosphate contacts are provided by residues arginine 96, lysine 97, lysine 100, histidine 102, and 122–130 (EDTSTTGGS). Orotate contacts are provided by threonine 126 and arginine 154.

This sequence belongs to the purine/pyrimidine phosphoribosyltransferase family. PyrE subfamily. As to quaternary structure, homodimer. It depends on Mg(2+) as a cofactor.

The catalysed reaction is orotidine 5'-phosphate + diphosphate = orotate + 5-phospho-alpha-D-ribose 1-diphosphate. Its pathway is pyrimidine metabolism; UMP biosynthesis via de novo pathway; UMP from orotate: step 1/2. Functionally, catalyzes the transfer of a ribosyl phosphate group from 5-phosphoribose 1-diphosphate to orotate, leading to the formation of orotidine monophosphate (OMP). This chain is Orotate phosphoribosyltransferase, found in Streptomyces avermitilis (strain ATCC 31267 / DSM 46492 / JCM 5070 / NBRC 14893 / NCIMB 12804 / NRRL 8165 / MA-4680).